We begin with the raw amino-acid sequence, 129 residues long: Histone H2A.J (129 aa).

The disordered stretch occupies residues 1-22 (MSGRGKQGGKVRAKAKSRSSRA). N6-acetyllysine is present on residues Lys6 and Lys10. The segment covering 7–19 (QGGKVRAKAKSRS) has biased composition (basic residues). At Lys10 the chain carries N6-lactoyllysine; alternate. Gln105 carries the post-translational modification N5-methylglutamine. The residue at position 121 (Thr121) is a Phosphothreonine; by DCAF1.

This sequence belongs to the histone H2A family. In terms of assembly, the nucleosome is a histone octamer containing two molecules each of H2A, H2B, H3 and H4 assembled in one H3-H4 heterotetramer and two H2A-H2B heterodimers. The octamer wraps approximately 147 bp of DNA. Post-translationally, monoubiquitination of Lys-120 (H2AXK119ub) gives a specific tag for epigenetic transcriptional repression. Following DNA double-strand breaks (DSBs), it is ubiquitinated through 'Lys-63' linkage of ubiquitin moieties. In terms of processing, glutamine methylation at Gln-105 (H2AQ104me) by FBL is specifically dedicated to polymerase I. It is present at 35S ribosomal DNA locus and impairs binding of the FACT complex. Phosphorylation on Ser-2 (H2AS1ph) is enhanced during mitosis. Phosphorylation on Ser-2 by RPS6KA5/MSK1 directly represses transcription. Acetylation of H3 inhibits Ser-2 phosphorylation by RPS6KA5/MSK1. Phosphorylation at Thr-121 (H2AT120ph) by DCAF1 is present in the regulatory region of many tumor suppresor genes and down-regulates their transcription.

It localises to the nucleus. The protein resides in the chromosome. Functionally, core component of nucleosome. Nucleosomes wrap and compact DNA into chromatin, limiting DNA accessibility to the cellular machineries which require DNA as a template. Histones thereby play a central role in transcription regulation, DNA repair, DNA replication and chromosomal stability. DNA accessibility is regulated via a complex set of post-translational modifications of histones, also called histone code, and nucleosome remodeling. This chain is Histone H2A.J, found in Macaca fascicularis (Crab-eating macaque).